A 402-amino-acid chain; its full sequence is 1-deoxy-D-xylulose 5-phosphate reductoisomerase (402 aa).

NADPH is bound by residues Thr10, Gly11, Ser12, Ile13, Gly36, Arg37, Asn38, and Asn124. Lys125 is a binding site for 1-deoxy-D-xylulose 5-phosphate. Glu126 is a binding site for NADPH. Asp150 serves as a coordination point for Mn(2+). 4 residues coordinate 1-deoxy-D-xylulose 5-phosphate: Ser151, Glu152, Ser186, and His209. Residue Glu152 participates in Mn(2+) binding. An NADPH-binding site is contributed by Gly215. Ser222, Asn227, Lys228, and Glu231 together coordinate 1-deoxy-D-xylulose 5-phosphate. Glu231 is a binding site for Mn(2+).

This sequence belongs to the DXR family. Mg(2+) is required as a cofactor. Mn(2+) serves as cofactor.

It catalyses the reaction 2-C-methyl-D-erythritol 4-phosphate + NADP(+) = 1-deoxy-D-xylulose 5-phosphate + NADPH + H(+). It participates in isoprenoid biosynthesis; isopentenyl diphosphate biosynthesis via DXP pathway; isopentenyl diphosphate from 1-deoxy-D-xylulose 5-phosphate: step 1/6. With respect to regulation, inhibited by fosmidomycin. Functionally, catalyzes the NADPH-dependent rearrangement and reduction of 1-deoxy-D-xylulose-5-phosphate (DXP) to 2-C-methyl-D-erythritol 4-phosphate (MEP). The chain is 1-deoxy-D-xylulose 5-phosphate reductoisomerase from Synechococcus sp. (strain ATCC 27144 / PCC 6301 / SAUG 1402/1) (Anacystis nidulans).